Consider the following 481-residue polypeptide: Cobyric acid synthase (481 aa).

The GATase cobBQ-type domain occupies 247–433; that stretch reads AFNVVVPLLP…LHGLFDVPDS (187 aa). Residue C328 is the Nucleophile of the active site. H425 is a catalytic residue.

It belongs to the CobB/CobQ family. CobQ subfamily.

It functions in the pathway cofactor biosynthesis; adenosylcobalamin biosynthesis. Functionally, catalyzes amidations at positions B, D, E, and G on adenosylcobyrinic A,C-diamide. NH(2) groups are provided by glutamine, and one molecule of ATP is hydrogenolyzed for each amidation. The polypeptide is Cobyric acid synthase (Alcanivorax borkumensis (strain ATCC 700651 / DSM 11573 / NCIMB 13689 / SK2)).